A 307-amino-acid chain; its full sequence is Ubiquitin recognition factor in ER-associated degradation protein 1 (307 aa).

Methionine 1 carries the post-translational modification N-acetylmethionine. Phosphoserine is present on residues serine 129, serine 231, serine 245, serine 247, and serine 299. 2 disordered regions span residues glycine 230 to lysine 255 and glutamate 282 to proline 307.

It belongs to the UFD1 family. As to quaternary structure, interacts with USP13. Heterodimer with NPLOC4, this heterodimer binds VCP and inhibits Golgi membrane fusion. Interacts with ZFAND2B; probably through VCP.

It is found in the nucleus. It localises to the cytoplasm. The protein localises to the cytosol. It participates in protein degradation; proteasomal ubiquitin-dependent pathway. Functionally, essential component of the ubiquitin-dependent proteolytic pathway which degrades ubiquitin fusion proteins. The ternary complex containing UFD1, VCP and NPLOC4 binds ubiquitinated proteins and is necessary for the export of misfolded proteins from the ER to the cytoplasm, where they are degraded by the proteasome. The NPLOC4-UFD1-VCP complex regulates spindle disassembly at the end of mitosis and is necessary for the formation of a closed nuclear envelope. It may be involved in the development of some ectoderm-derived structures. Acts as a negative regulator of type I interferon production via the complex formed with VCP and NPLOC4, which binds to RIGI and recruits RNF125 to promote ubiquitination and degradation of RIGI. In Rattus norvegicus (Rat), this protein is Ubiquitin recognition factor in ER-associated degradation protein 1.